Consider the following 418-residue polypeptide: Serine/threonine transporter SstT (418 aa).

8 helical membrane passes run 21–41 (ILIGLVAGIVLALVSTPAAIA), 49–69 (FVGALKAVAPVLVLMLVIASI), 83–103 (ILFLYVLGAFSAALVAVVVSF), 142–162 (ALLNANYIGILAWAVGLGIAL), 190–210 (FAPLGIFGLVASTIAATGFGA), 217–237 (LLVVLIGCMLLVALVVNPLIV), 299–319 (MAGAAITITVLTLAAVHTLGI), and 331–351 (VVAAVCACGASGVAGGSLLLI).

Belongs to the dicarboxylate/amino acid:cation symporter (DAACS) (TC 2.A.23) family.

The protein resides in the cell inner membrane. The catalysed reaction is L-serine(in) + Na(+)(in) = L-serine(out) + Na(+)(out). The enzyme catalyses L-threonine(in) + Na(+)(in) = L-threonine(out) + Na(+)(out). Involved in the import of serine and threonine into the cell, with the concomitant import of sodium (symport system). The polypeptide is Serine/threonine transporter SstT (Yersinia pseudotuberculosis serotype O:1b (strain IP 31758)).